The following is a 283-amino-acid chain: MEIKFKKMHGTGNDFIMIYYEDYPFEQHFNQLAKEVCHRHFGIGADGLMIVKESSVADVQMKYFNSDGSEAGMCGNGIRCFAKFVYDEGLVKKEIFTVETLSGVKELQVATVEEKVSSVRVNMGKMVLDPKQIPVNSEGLQFINEQLMIDGEKYTISTVLLGVPHTIIFMETLDLDRVKRVGKIIENHQLFPENTNVNFAQIINQNTIRVRTWERGAGYTLACGTGVSSVCGIANHLSLVGPNVVVEIEGGKLDIEIAPEGDIYMEGPAKDICKGVYLNSLIK.

Substrate is bound by residues Asn13 and Asn65. The active-site Proton donor is the Cys74. Residues 75 to 76, Asn196, and 214 to 215 contribute to the substrate site; these read GN and ER. Residue Cys223 is the Proton acceptor of the active site. A substrate-binding site is contributed by 224–225; it reads GT.

This sequence belongs to the diaminopimelate epimerase family. As to quaternary structure, homodimer.

The protein localises to the cytoplasm. It catalyses the reaction (2S,6S)-2,6-diaminopimelate = meso-2,6-diaminopimelate. It functions in the pathway amino-acid biosynthesis; L-lysine biosynthesis via DAP pathway; DL-2,6-diaminopimelate from LL-2,6-diaminopimelate: step 1/1. In terms of biological role, catalyzes the stereoinversion of LL-2,6-diaminopimelate (L,L-DAP) to meso-diaminopimelate (meso-DAP), a precursor of L-lysine and an essential component of the bacterial peptidoglycan. This is Diaminopimelate epimerase from Alkaliphilus metalliredigens (strain QYMF).